Consider the following 163-residue polypeptide: MTSIAISSGSFDPITLGHLDIIKRGAKVFDEVYVVVLNNSSKKPFFSVEERLELIREATKDIPNVKVDSHSGLLVEYAKMRNANAILRGLRAVSDFEYEMQITSMNRKLDESIETFFIMTNNQYSFLSSSIVKEVARYGGSVVDLVPPIVERALKEKFKTPLK.

Ser10 is a binding site for substrate. ATP contacts are provided by residues 10–11 and His18; that span reads SF. Residues Lys42, Leu74, and Arg88 each contribute to the substrate site. ATP contacts are provided by residues 89–91, Glu99, and 124–130; these read GLR and YSFLSSS.

This sequence belongs to the bacterial CoaD family. Homohexamer. Requires Mg(2+) as cofactor.

It localises to the cytoplasm. It carries out the reaction (R)-4'-phosphopantetheine + ATP + H(+) = 3'-dephospho-CoA + diphosphate. It participates in cofactor biosynthesis; coenzyme A biosynthesis; CoA from (R)-pantothenate: step 4/5. Reversibly transfers an adenylyl group from ATP to 4'-phosphopantetheine, yielding dephospho-CoA (dPCoA) and pyrophosphate. The polypeptide is Phosphopantetheine adenylyltransferase (Bacillus mycoides (strain KBAB4) (Bacillus weihenstephanensis)).